The following is an 827-amino-acid chain: MMEGLKKRTRKAFGIRKKEKDTDSTGSPDRDGMQPSPHEPPYHSKAECAREGGKKASKKSNGAPNGFYAEIDWERYNSPELDEEGYSIRPEEPGSTKGKHFYSSSESEEEEESHKKFNIKIKPLQSKDVLKNAATVDELKASIGNIALSPSPVRKSPRRSPGAIKRNLSSEEVARPRRSTPTPELTSKKPLDDTLALAPLFGPPLESAFDEQKTEVLLDQPEIWGSGQPINPSMESPKLARPFPTGTPPPLPPKAVPATPPRTGSPLTVATGNDQAATEAKIEKLPSISDLDSIFGPVLSPKSVAVNTEEKWVHFSDASPEHVTPELTPREKVVTPPAASDIPADSPAPGPPGPPGSAGPPGPPGPRHVPSPLNLEEVQKKVAEQTFIKDDYLETLSSPKECGLGQRATPPPPPPPTYRTVVSSPGPGSGSGTGTASGASSPARPATPLVPCSSTTPPPPPPRPPSRPKLPPGKPGVGDVSRPFSPPIHSSSPPPIAPLARAESTSSISSTNSLSAATTPTVENEQPSLVWFDRGKFYLTFEGSSRGPSPLTMGAQDTLPVAAAFTETVNAYFKGADPSKCIVKITGEMVLSFPAGITRHFANNPSPAALTFRVINSSRLEHVLPNPQLLCCDNTQNDANTKEFWVNMPNLMTHLKKVSEQKPQATYYNVDMLKYQVSAQGIQSTPLNLAVNWRCEPGSTDLRIDYKYNTDAMTTAVALNNVQFLVPIDGGVTKLQAVLPPAVWNAEQQRILWKIPDISQKSENGGVGSLLARFQLSEGPSKPSPLVVQFTSEGSTLSGCDIELVGAGYRFSLIKKRFAAGKYLADN.

Disordered stretches follow at residues 1 to 115 (MMEG…ESHK), 142 to 205 (SIGN…GPPL), and 223 to 278 (IWGS…QAAT). 2 stretches are compositionally biased toward basic and acidic residues: residues 16–32 (RKKE…DRDG) and 40–54 (PPYH…EGGK). 8 positions are modified to phosphoserine: Ser-78, Ser-104, Ser-105, Ser-107, Ser-149, Ser-151, Ser-156, and Ser-169. Phosphothreonine is present on residues Thr-180 and Thr-182. Ser-236 carries the phosphoserine modification. Pro residues predominate over residues 245–260 (TGTPPPLPPKAVPATP). Thr-247 and Thr-259 each carry phosphothreonine. 6 positions are modified to phosphoserine: Ser-265, Ser-287, Ser-289, Ser-300, Ser-316, and Ser-319. A compositionally biased stretch (polar residues) spans 265–276 (SPLTVATGNDQA). Residues 314–333 (HFSDASPEHVTPELTPREKV) show a composition bias toward basic and acidic residues. The tract at residues 314-523 (HFSDASPEHV…LSAATTPTVE (210 aa)) is disordered. Phosphothreonine is present on residues Thr-324, Thr-328, and Thr-335. A compositionally biased stretch (low complexity) spans 336-345 (PPAASDIPAD). Residues 346-369 (SPAPGPPGPPGSAGPPGPPGPRHV) are compositionally biased toward pro residues. At Ser-371 the chain carries Phosphoserine. Positions 377 to 392 (EVQKKVAEQTFIKDDY) are enriched in basic and acidic residues. Phosphoserine is present on Ser-398. Thr-409 carries the phosphothreonine modification. A compositionally biased stretch (low complexity) spans 436–455 (ASGASSPARPATPLVPCSST). The segment covering 456 to 474 (TPPPPPPRPPSRPKLPPGK) has biased composition (pro residues). Composition is skewed to low complexity over residues 481-491 (SRPFSPPIHSS) and 498-521 (PLAR…TTPT). Ser-485 bears the Phosphoserine mark. The 269-residue stretch at 558–826 (TLPVAAAFTE…RFAAGKYLAD (269 aa)) folds into the MHD domain. Interaction with DPF motifs-containing proteins stretches follow at residues 560 to 566 (PVAAAFT), 592 to 594 (SFP), 666 to 669 (TYYN), and 812 to 817 (SLIKKR). A necessary and sufficient to mediate interaction with CANX region spans residues 648 to 827 (MPNLMTHLKK…FAAGKYLADN (180 aa)).

In terms of assembly, interacts with proteins essential or regulating the formation of functional clathrin-coated pits. Interacts with CANX. Interacts with AP2A1. Interacts with EPS15. Interacts with SH3GL3. Interacts with AMPH. Interacts with ITSN1 (via SH3 domains). Interacts with and REPS1. In terms of tissue distribution, specifically expressed in brain (at protein level).

Its subcellular location is the membrane. The protein localises to the clathrin-coated pit. Its function is as follows. May function in clathrin-mediated endocytosis. Has both a membrane binding/tubulating activity and the ability to recruit proteins essential to the formation of functional clathrin-coated pits. Has a preference for membranes enriched in phosphatidylserine and phosphoinositides and is required for the endocytosis of the transferrin receptor. May also bind tubulin. May play a role in the regulation of energy homeostasis. This is SH3-containing GRB2-like protein 3-interacting protein 1 (Sgip1) from Rattus norvegicus (Rat).